Reading from the N-terminus, the 775-residue chain is K(+)-insensitive pyrophosphate-energized proton pump (775 aa).

The next 5 helical transmembrane spans lie at Ser-9 to Ile-29, Ile-65 to Pro-85, Ala-108 to Val-128, Met-160 to Ala-180, and Leu-185 to Ile-205. Lys-208 contributes to the substrate binding site. Mg(2+) is bound by residues Asp-211, Asp-215, and Asp-241. The next 6 membrane-spanning stretches (helical) occupy residues Val-259–Ile-279, Phe-288–Leu-308, Phe-327–Val-347, Phe-359–Phe-379, Ser-413–Gly-433, and Ala-442–Ile-462. Mg(2+) is bound at residue Asp-472. The next 4 helical transmembrane spans lie at Ile-508–Val-528, Pro-555–Ile-575, Leu-622–Val-642, and Ala-644–Ala-664. 3 residues coordinate Ca(2+): Asp-671, Asp-697, and Asp-701. Lys-704 lines the substrate pocket. Helical transmembrane passes span Ala-710–Val-730 and Gly-735–Trp-755.

Belongs to the H(+)-translocating pyrophosphatase (TC 3.A.10) family. K(+)-insensitive subfamily. As to quaternary structure, homodimer. Requires Mg(2+) as cofactor.

It is found in the cell membrane. The catalysed reaction is diphosphate + H2O + H(+)(in) = 2 phosphate + 2 H(+)(out). Functionally, proton pump that utilizes the energy of pyrophosphate hydrolysis as the driving force for proton movement across the membrane. Generates a proton motive force. In Chloroflexus aurantiacus (strain ATCC 29366 / DSM 635 / J-10-fl), this protein is K(+)-insensitive pyrophosphate-energized proton pump.